Consider the following 695-residue polypeptide: Segment polarity protein dishevelled homolog DVL-1 (695 aa).

Residues 1–85 (MAETKIIYHM…RVVSWLVLAE (85 aa)) form the DIX domain. Residues 89–235 (SDAGSQGTDS…QRLRQTDRAS (147 aa)) form a disordered region. Residues 142–151 (SHRRERARRR) are compositionally biased toward basic residues. The span at 152–171 (NRDEAARTNGHPRGDRRRDL) shows a compositional bias: basic and acidic residues. The segment covering 177 to 192 (SASTVLSSELESSSFI) has biased composition (low complexity). Phosphoserine is present on serine 194. Residues 201 to 214 (SRLSSSTEQSTSSR) show a composition bias toward low complexity. Over residues 215–228 (LVRKHKCRRRKQRL) the composition is skewed to basic residues. One can recognise a PDZ domain in the interval 251-323 (TVTLNMERHH…NDDAVRVLRE (73 aa)). Positions 425-499 (PDSGLEIRDR…SEQCYYVFGD (75 aa)) constitute a DEP domain. Positions 559 to 580 (SCGSGSAGSQQSEGSKSSGSTR) are enriched in low complexity. The tract at residues 559 to 641 (SCGSGSAGSQ…SQASAVAPGL (83 aa)) is disordered. A compositionally biased stretch (polar residues) spans 622–635 (SQLSRGSSPRSQAS).

The protein belongs to the DSH family. Interacts with CXXC4. Interacts (via PDZ domain) with TMEM88. Interacts with BRD7 and INVS. Interacts (via PDZ domain) with VANGL1 and VANGL2 (via C-terminus). Interacts (via PDZ domain) with NXN. Interacts with ARRB1; the interaction is enhanced by phosphorylation of DVL1. Interacts with CYLD. Interacts (via PDZ domain) with RYK. Self-associates (via DIX domain) and forms higher homooligomers. Interacts (via PDZ domain) with DACT1 and FZD7, where DACT1 and FZD7 compete for the same binding site. Interacts (via DEP domain) with MUSK; the interaction is direct and mediates the formation a DVL1, MUSK and PAK1 ternary complex involved in AChR clustering. Interacts with DCDC2. Interacts with FOXK2. Interacts with PKD1 (via extracellular domain). Interacts (via PDZ domain) with CCDC88C/DAPLE; competes with CCDC88C for binding to frizzled receptor FZD7 and dissociates from CCDC88C following initiation of non-canonical Wnt signaling when CCDC88C displaces DVL1 from ligand-activated FZD7. Post-translationally, ubiquitinated; undergoes both 'Lys-48'-linked ubiquitination, leading to its subsequent degradation by the ubiquitin-proteasome pathway, and 'Lys-63'-linked ubiquitination. The interaction with INVS is required for ubiquitination. Deubiquitinated by CYLD, which acts on 'Lys-63'-linked ubiquitin chains. As to expression, high levels are seen in the brain, testis and kidney, lower levels in the ovary, breast, muscle, liver and small intestine, and very low levels are seen in the spleen and thymus. A moderate level expression is seen in the heart.

The protein resides in the cell membrane. The protein localises to the cytoplasm. It localises to the cytosol. It is found in the cytoplasmic vesicle. In terms of biological role, participates in Wnt signaling by binding to the cytoplasmic C-terminus of frizzled family members and transducing the Wnt signal to down-stream effectors. Plays a role both in canonical and non-canonical Wnt signaling. Plays a role in the signal transduction pathways mediated by multiple Wnt genes. Required for LEF1 activation upon WNT1 and WNT3A signaling. DVL1 and PAK1 form a ternary complex with MUSK which is important for MUSK-dependent regulation of AChR clustering during the formation of the neuromuscular junction (NMJ). This Mus musculus (Mouse) protein is Segment polarity protein dishevelled homolog DVL-1 (Dvl1).